The following is a 394-amino-acid chain: Gap junction gamma-1 protein (394 aa).

Over 1–22 the chain is Cytoplasmic; the sequence is MSWSFLTRLLEEIHNHSTFVGK. Residues 23–45 traverse the membrane as a helical segment; it reads IWLSVLIVFRIVLTAVGGESIYY. Over 46–75 the chain is Extracellular; sequence DEQSKFVCNTEQPGCENVCYDAFAPLSHVR. Residues 76-95 traverse the membrane as a helical segment; sequence FWVFQIILVATPSVMYLGYA. Over 96 to 176 the chain is Cytoplasmic; it reads IHKIARMVEH…RRIREDGLMR (81 aa). A helical membrane pass occupies residues 177-199; that stretch reads IYVLQLLVRATFEVGFLIGQYLL. Residues 200-229 lie on the Extracellular side of the membrane; that stretch reads YGFEVSPVFVCSRKPCPHKIDCFISRPTEK. A helical membrane pass occupies residues 230 to 252; that stretch reads TIFLLIMYGVSCMCLLLNVWEML. The Cytoplasmic segment spans residues 253–394; the sequence is HLGFGTIRDT…SGDGKNSVWI (142 aa). The tract at residues 354–394 is disordered; the sequence is IQAYNNQNNPGSSSREKKSKAGSNKSSASSKSGDGKNSVWI. The span at 356-366 shows a compositional bias: polar residues; that stretch reads AYNNQNNPGSS. The span at 374–394 shows a compositional bias: low complexity; sequence AGSNKSSASSKSGDGKNSVWI.

Belongs to the connexin family. Gamma-type subfamily. A connexon is composed of a hexamer of connexins. As to expression, mostly in heart and stomach.

It localises to the cell membrane. The protein resides in the cell junction. The protein localises to the gap junction. Its function is as follows. One gap junction consists of a cluster of closely packed pairs of transmembrane channels, the connexons, through which materials of low MW diffuse from one cell to a neighboring cell. The protein is Gap junction gamma-1 protein (GJC1) of Gallus gallus (Chicken).